Reading from the N-terminus, the 22-residue chain is Pectinesterase (22 aa).

The active-site Proton donor is Asp6. Substrate contacts are provided by Arg19 and Trp21.

It belongs to the pectinesterase family.

Its subcellular location is the secreted. The protein localises to the cell wall. It carries out the reaction [(1-&gt;4)-alpha-D-galacturonosyl methyl ester](n) + n H2O = [(1-&gt;4)-alpha-D-galacturonosyl](n) + n methanol + n H(+). The protein operates within glycan metabolism; pectin degradation; 2-dehydro-3-deoxy-D-gluconate from pectin: step 1/5. The chain is Pectinesterase from Capsicum chinense (Scotch bonnet).